The chain runs to 492 residues: Steroid 21-hydroxylase (492 aa).

Positions 91 and 120 each coordinate heme b. Residue Arg-231 coordinates 17alpha-hydroxyprogesterone. Position 231 (Arg-231) interacts with progesterone. Heme b-binding residues include His-363, Arg-424, and Cys-426.

It belongs to the cytochrome P450 family. The cofactor is heme b.

It is found in the endoplasmic reticulum membrane. Its subcellular location is the microsome membrane. The enzyme catalyses 17alpha-hydroxyprogesterone + reduced [NADPH--hemoprotein reductase] + O2 = 11-deoxycortisol + oxidized [NADPH--hemoprotein reductase] + H2O + H(+). The catalysed reaction is progesterone + reduced [NADPH--hemoprotein reductase] + O2 = 21-hydroxyprogesterone + oxidized [NADPH--hemoprotein reductase] + H2O + H(+). Specifically catalyzes the 21-hydroxylation of steroids. Required for the adrenal synthesis of mineralocorticoids and glucocorticoids. In Lynx lynx (Eurasian lynx), this protein is Steroid 21-hydroxylase (CYP21).